We begin with the raw amino-acid sequence, 523 residues long: MVRGIIRVVSLASVSLTSSGFFLYGTGHWDPSDFGVVRIGRAVLTTAAITWDYLTELRHVKAGTEEYESIKSQVHFRSAHRLLDLCCANRGTFIKVGQHLGALEYLVPPEYTKTLSVLHSQAPCTPFPDVVQVIREDLGKEISEVFVEFEEKPLGAASLAQVHRAVLQDGRKVAVKVQHPKVQAQSARDILLMEVLLHAVKKIFPQFEFMWLIEEAKKNLPLELDFENEGRNAEKMSAIVSSFSFLRIPRIYWELSTKRVLVMEYMEGGQVNDREYMKRNQIDINQVARALGQLYSEMIFVHGFVHCDPHPGNVLVRQNPETLVPEIILLDHGLYQVLTESFRLDYCSLWQALIAADMQQIRIYSQRLGAGELYPLFACMLTARSWESVNQGIYQNTVSREEALEIRSNAATYLPEISQLLASVPRQMLLLLKTNDLLRGIETSLGTHASSSSFLNMSRCCVRALARHRKEKTDSLWSYIHISLAETFSLGQLQIYEIVLRLQASCVGCWIRRMMQWVFLYIH.

Residues 148 to 484 (EFEEKPLGAA…SLWSYIHISL (337 aa)) form the Protein kinase domain. ATP is bound by residues 154-162 (LGAASLAQV) and Lys176. Asp308 (proton acceptor) is an active-site residue.

The protein belongs to the protein kinase superfamily. ADCK protein kinase family.

Its subcellular location is the mitochondrion. Appears to be essential for maintaining mitochondrial cristae formation and mitochondrial function by acting via YME1L1 in a kinase-independent manner to regulate essential mitochondrial structural proteins OPA1 and IMMT. The action of this enzyme is not yet clear. It is not known if it has protein kinase activity and what type of substrate it would phosphorylate (Ser, Thr or Tyr). The sequence is that of AarF domain-containing protein kinase 1 (adck1) from Xenopus tropicalis (Western clawed frog).